A 104-amino-acid polypeptide reads, in one-letter code: MTNRLVLSGTVCRTPLRKVSPSGIPHCQFVLEHRSVQEEAGFHRQAWCQMPVIISGHENQAITHSITVGSAVTVQGFISCHKAKNGLSKMVLHAEQIDLIDSGD.

One can recognise an SSB domain in the interval Met1 to Asp101.

This sequence belongs to the PriB family. Homodimer. Interacts with PriA and DnaT. Component of the replication restart primosome. Primosome assembly occurs via a 'hand-off' mechanism. PriA binds to replication forks, subsequently PriB then DnaT bind; DnaT then displaces ssDNA to generate the helicase loading substrate.

Involved in the restart of stalled replication forks, which reloads the replicative helicase on sites other than the origin of replication; the PriA-PriB pathway is the major replication restart pathway. During primosome assembly it facilitates complex formation between PriA and DnaT on DNA; stabilizes PriA on DNA. Stimulates the DNA unwinding activity of PriA helicase. This chain is Replication restart protein PriB, found in Enterobacter sp. (strain 638).